The chain runs to 488 residues: UDP-N-acetylmuramate--L-alanine ligase (488 aa).

129–135 (GTHGKTT) serves as a coordination point for ATP.

Belongs to the MurCDEF family.

The protein resides in the cytoplasm. It carries out the reaction UDP-N-acetyl-alpha-D-muramate + L-alanine + ATP = UDP-N-acetyl-alpha-D-muramoyl-L-alanine + ADP + phosphate + H(+). It participates in cell wall biogenesis; peptidoglycan biosynthesis. Functionally, cell wall formation. The protein is UDP-N-acetylmuramate--L-alanine ligase of Chromohalobacter salexigens (strain ATCC BAA-138 / DSM 3043 / CIP 106854 / NCIMB 13768 / 1H11).